The sequence spans 617 residues: Threonine--tRNA ligase (617 aa).

The catalytic stretch occupies residues 209–502 (DHRRLGKDLD…MTENYAGDFP (294 aa)). Residues Cys-302, His-353, and His-479 each contribute to the Zn(2+) site.

It belongs to the class-II aminoacyl-tRNA synthetase family. As to quaternary structure, homodimer. Zn(2+) serves as cofactor.

It is found in the cytoplasm. It carries out the reaction tRNA(Thr) + L-threonine + ATP = L-threonyl-tRNA(Thr) + AMP + diphosphate + H(+). Catalyzes the attachment of threonine to tRNA(Thr) in a two-step reaction: L-threonine is first activated by ATP to form Thr-AMP and then transferred to the acceptor end of tRNA(Thr). Also edits incorrectly charged L-seryl-tRNA(Thr). This is Threonine--tRNA ligase from Synechococcus sp. (strain CC9311).